Reading from the N-terminus, the 183-residue chain is Inner membrane-spanning protein YciB (183 aa).

5 consecutive transmembrane segments (helical) span residues 4–24 (FIEF…DIYM), 50–70 (MQLF…FFHD), 72–92 (TFIK…LLIS), 119–139 (VNLG…YVAF), and 149–169 (FKVF…GVYL).

The protein belongs to the YciB family.

The protein resides in the cell inner membrane. Its function is as follows. Plays a role in cell envelope biogenesis, maintenance of cell envelope integrity and membrane homeostasis. This Aeromonas hydrophila subsp. hydrophila (strain ATCC 7966 / DSM 30187 / BCRC 13018 / CCUG 14551 / JCM 1027 / KCTC 2358 / NCIMB 9240 / NCTC 8049) protein is Inner membrane-spanning protein YciB.